The primary structure comprises 42 residues: Photosystem I reaction center subunit IX (42 aa).

A helical membrane pass occupies residues 7-27; the sequence is YLSVAPVLSTLWFGSLAGLLI.

Belongs to the PsaJ family.

The protein resides in the plastid. It localises to the chloroplast thylakoid membrane. Functionally, may help in the organization of the PsaE and PsaF subunits. This is Photosystem I reaction center subunit IX from Lepidium virginicum (Virginia pepperweed).